Consider the following 257-residue polypeptide: Folate receptor alpha (257 aa).

The first 24 residues, 1 to 24 (MAQRMTTQLLLLLVWVAVVGEAQT), serve as a signal peptide directing secretion. 8 cysteine pairs are disulfide-bonded: Cys-37-Cys-65, Cys-57-Cys-105, Cys-66-Cys-109, Cys-89-Cys-175, Cys-96-Cys-146, Cys-135-Cys-209, Cys-139-Cys-189, and Cys-152-Cys-169. Asn-69 carries an N-linked (GlcNAc...) asparagine glycan. Folate-binding positions include Asp-103, Tyr-107, 124 to 128 (WRKER), 157 to 162 (HKGWNW), and Ser-196. A glycan (N-linked (GlcNAc...) asparagine) is linked at Asn-161. N-linked (GlcNAc...) asparagine glycosylation is present at Asn-201. Residue Ser-234 is the site of GPI-anchor amidated serine attachment. A propeptide spans 235–257 (GAGPWAAWPFLLSLALMLLWLLS) (removed in mature form).

Belongs to the folate receptor family. The secreted form is derived from the membrane-bound form either by cleavage of the GPI anchor, or/and by proteolysis catalyzed by a metalloprotease. As to expression, primarily expressed in tissues of epithelial origin. Expression is increased in malignant tissues. Expressed in kidney, lung and cerebellum. Detected in placenta and thymus epithelium.

It is found in the cell membrane. The protein localises to the apical cell membrane. Its subcellular location is the basolateral cell membrane. It localises to the secreted. The protein resides in the cytoplasmic vesicle. It is found in the clathrin-coated vesicle. The protein localises to the endosome. Its function is as follows. Binds to folate and reduced folic acid derivatives and mediates delivery of 5-methyltetrahydrofolate and folate analogs into the interior of cells. Has high affinity for folate and folic acid analogs at neutral pH. Exposure to slightly acidic pH after receptor endocytosis triggers a conformation change that strongly reduces its affinity for folates and mediates their release. Required for normal embryonic development and normal cell proliferation. This chain is Folate receptor alpha (FOLR1), found in Homo sapiens (Human).